Consider the following 95-residue polypeptide: Large ribosomal subunit protein uL22c (95 aa).

Belongs to the universal ribosomal protein uL22 family. In terms of assembly, part of the 50S ribosomal subunit.

It is found in the plastid. Its subcellular location is the chloroplast. Its function is as follows. This protein binds specifically to 23S rRNA. The globular domain of the protein is located near the polypeptide exit tunnel on the outside of the subunit, while an extended beta-hairpin is found that lines the wall of the exit tunnel in the center of the 70S ribosome. The sequence is that of Large ribosomal subunit protein uL22c (rpl22) from Cyanidioschyzon merolae (strain NIES-3377 / 10D) (Unicellular red alga).